Here is a 645-residue protein sequence, read N- to C-terminus: UPF0313 protein CLB_0243 (645 aa).

Residues Ala-295–Ser-566 form the Radical SAM core domain. [4Fe-4S] cluster contacts are provided by Cys-309, Cys-313, and Cys-316. The interval Asn-598–Lys-645 is disordered. The span at Pro-600–Asn-609 shows a compositional bias: basic residues. Positions Ala-610–Asn-624 are enriched in low complexity. Basic residues predominate over residues Lys-632 to Lys-645.

The protein belongs to the UPF0313 family. [4Fe-4S] cluster serves as cofactor.

The protein is UPF0313 protein CLB_0243 of Clostridium botulinum (strain ATCC 19397 / Type A).